The sequence spans 107 residues: Large ribosomal subunit protein uL24 (107 aa).

It belongs to the universal ribosomal protein uL24 family. Part of the 50S ribosomal subunit.

Functionally, one of two assembly initiator proteins, it binds directly to the 5'-end of the 23S rRNA, where it nucleates assembly of the 50S subunit. One of the proteins that surrounds the polypeptide exit tunnel on the outside of the subunit. In Nitratidesulfovibrio vulgaris (strain DSM 19637 / Miyazaki F) (Desulfovibrio vulgaris), this protein is Large ribosomal subunit protein uL24.